The chain runs to 204 residues: Guanylate kinase (204 aa).

Residues 3–181 form the Guanylate kinase-like domain; it reads GTLYIVSAAS…AVSEMSAIFT (179 aa). 10–17 contacts ATP; that stretch reads AASGTGKS.

The protein belongs to the guanylate kinase family.

Its subcellular location is the cytoplasm. It catalyses the reaction GMP + ATP = GDP + ADP. Essential for recycling GMP and indirectly, cGMP. The polypeptide is Guanylate kinase (gmk) (Xylella fastidiosa (strain 9a5c)).